A 346-amino-acid chain; its full sequence is Histidinol-phosphate aminotransferase (346 aa).

Lysine 209 is modified (N6-(pyridoxal phosphate)lysine).

Belongs to the class-II pyridoxal-phosphate-dependent aminotransferase family. Histidinol-phosphate aminotransferase subfamily. As to quaternary structure, homodimer. Pyridoxal 5'-phosphate is required as a cofactor.

It catalyses the reaction L-histidinol phosphate + 2-oxoglutarate = 3-(imidazol-4-yl)-2-oxopropyl phosphate + L-glutamate. It participates in amino-acid biosynthesis; L-histidine biosynthesis; L-histidine from 5-phospho-alpha-D-ribose 1-diphosphate: step 7/9. In Vibrio parahaemolyticus serotype O3:K6 (strain RIMD 2210633), this protein is Histidinol-phosphate aminotransferase.